The following is a 133-amino-acid chain: Large ribosomal subunit protein eL14 (133 aa).

It belongs to the eukaryotic ribosomal protein eL14 family.

This Griffithsia japonica (Red alga) protein is Large ribosomal subunit protein eL14 (RPL14).